A 134-amino-acid polypeptide reads, in one-letter code: Probable salivary secreted peptide (134 aa).

Residues 1–24 form the signal peptide; sequence MGAQKTIAYLAIIAIAVIFAQVNT.

It is found in the secreted. In Bombus ignitus (Bumblebee), this protein is Probable salivary secreted peptide.